A 1002-amino-acid chain; its full sequence is Ephrin type-B receptor 5 (1002 aa).

A signal peptide spans 1 to 29; it reads MDSNADISARRVSGMDWLWLVCFFHLVTS. Residues 30 to 564 lie on the Extracellular side of the membrane; that stretch reads LEEILLDTTG…AQDRLPLIVG (535 aa). The 183-residue stretch at 31-213 folds into the Eph LBD domain; that stretch reads EEILLDTTGE…FFYKCPAVVK (183 aa). 2 Fibronectin type-III domains span residues 344 to 452 and 453 to 548; these read APRD…TSQS and VPSA…TLMA. N446 carries an N-linked (GlcNAc...) asparagine glycan. Residues 565 to 585 form a helical membrane-spanning segment; sequence SALGGLAFLVIAAIAILAIIF. Residues 586 to 1002 are Cytoplasmic-facing; sequence KSKRRETPYT…HLNQLEPVEV (417 aa). The 264-residue stretch at 637 to 900 folds into the Protein kinase domain; it reads IKIEEVIGSG…QIVSALDKMI (264 aa). ATP contacts are provided by residues 643–651 and K669; that span reads IGSGEFGEV. Catalysis depends on D762, which acts as the Proton acceptor. Positions 906-928 are disordered; the sequence is LKATGTGSSRPSQPLLSNSPPDF. Residues 910–928 show a composition bias toward polar residues; the sequence is GTGSSRPSQPLLSNSPPDF. One can recognise an SAM domain in the interval 929–993; the sequence is PSLSNAHEWL…LNSIQLMKVH (65 aa). A PDZ-binding motif is present at residues 1000-1002; sequence VEV.

This sequence belongs to the protein kinase superfamily. Tyr protein kinase family. Ephrin receptor subfamily. In terms of tissue distribution, most abundant in thymus and detectable in brain, retina, kidney, lung and heart. Not detected in skeletal muscle and liver.

The protein resides in the membrane. It carries out the reaction L-tyrosyl-[protein] + ATP = O-phospho-L-tyrosyl-[protein] + ADP + H(+). Functionally, receptor for members of the ephrin-B family. In Gallus gallus (Chicken), this protein is Ephrin type-B receptor 5 (EPHB5).